The following is a 117-amino-acid chain: Photosystem II reaction center Psb28 protein (117 aa).

The protein belongs to the Psb28 family. In terms of assembly, part of the photosystem II complex.

The protein resides in the cellular thylakoid membrane. The polypeptide is Photosystem II reaction center Psb28 protein (Prochlorococcus marinus (strain MIT 9301)).